The sequence spans 267 residues: Probable 6-oxopurine nucleoside phosphorylase (267 aa).

Phosphate is bound by residues S10, R50–H51, and S83–A84. M188 contacts substrate. A phosphate-binding site is contributed by T189. Residue N212–A214 coordinates substrate.

Belongs to the PNP/MTAP phosphorylase family. MTAP subfamily. As to quaternary structure, homohexamer. Dimer of a homotrimer.

It carries out the reaction a purine D-ribonucleoside + phosphate = a purine nucleobase + alpha-D-ribose 1-phosphate. The enzyme catalyses guanosine + phosphate = alpha-D-ribose 1-phosphate + guanine. The catalysed reaction is inosine + phosphate = alpha-D-ribose 1-phosphate + hypoxanthine. It participates in purine metabolism; purine nucleoside salvage. Functionally, purine nucleoside phosphorylase which is highly specific for 6-oxopurine nucleosides. Cleaves guanosine or inosine to respective bases and sugar-1-phosphate molecules. Involved in purine salvage. The sequence is that of Probable 6-oxopurine nucleoside phosphorylase from Thermococcus kodakarensis (strain ATCC BAA-918 / JCM 12380 / KOD1) (Pyrococcus kodakaraensis (strain KOD1)).